The primary structure comprises 266 residues: 3-methyl-2-oxobutanoate hydroxymethyltransferase (266 aa).

Asp-43 and Asp-82 together coordinate Mg(2+). Residues 43-44 (DS), Asp-82, and Lys-110 contribute to the 3-methyl-2-oxobutanoate site. Mg(2+) is bound at residue Glu-112. The Proton acceptor role is filled by Glu-179.

The protein belongs to the PanB family. Homodecamer; pentamer of dimers. It depends on Mg(2+) as a cofactor.

It localises to the cytoplasm. The enzyme catalyses 3-methyl-2-oxobutanoate + (6R)-5,10-methylene-5,6,7,8-tetrahydrofolate + H2O = 2-dehydropantoate + (6S)-5,6,7,8-tetrahydrofolate. It functions in the pathway cofactor biosynthesis; (R)-pantothenate biosynthesis; (R)-pantoate from 3-methyl-2-oxobutanoate: step 1/2. Its function is as follows. Catalyzes the reversible reaction in which hydroxymethyl group from 5,10-methylenetetrahydrofolate is transferred onto alpha-ketoisovalerate to form ketopantoate. The polypeptide is 3-methyl-2-oxobutanoate hydroxymethyltransferase (Psychrobacter cryohalolentis (strain ATCC BAA-1226 / DSM 17306 / VKM B-2378 / K5)).